The primary structure comprises 302 residues: Chloramphenicol resistance protein (302 aa).

The protein localises to the cell membrane. This protein is thought to be a membrane-associated barrier of drug uptake. This is Chloramphenicol resistance protein (cml) from Escherichia coli.